Here is a 244-residue protein sequence, read N- to C-terminus: 5-oxoprolinase subunit A (244 aa).

The protein belongs to the LamB/PxpA family. In terms of assembly, forms a complex composed of PxpA, PxpB and PxpC.

The enzyme catalyses 5-oxo-L-proline + ATP + 2 H2O = L-glutamate + ADP + phosphate + H(+). Catalyzes the cleavage of 5-oxoproline to form L-glutamate coupled to the hydrolysis of ATP to ADP and inorganic phosphate. The protein is 5-oxoprolinase subunit A of Escherichia coli O139:H28 (strain E24377A / ETEC).